A 95-amino-acid chain; its full sequence is Large ribosomal subunit protein bL27 (95 aa).

Residues 1-6 constitute a propeptide that is removed on maturation; sequence MFLQLF.

The protein belongs to the bacterial ribosomal protein bL27 family. In terms of processing, the N-terminus is cleaved by ribosomal processing cysteine protease Prp.

The protein is Large ribosomal subunit protein bL27 of Symbiobacterium thermophilum (strain DSM 24528 / JCM 14929 / IAM 14863 / T).